The following is a 102-amino-acid chain: Hemoglobin subunit beta-Z (102 aa).

The region spanning 1–102 (FGNLSSAQAI…VANALSHKYH (102 aa)) is the Globin domain. Residues His-19 and His-48 each contribute to the heme b site.

It belongs to the globin family. As to quaternary structure, heterotetramer of two alpha chains and two beta chains.

This is an embryonic beta chain. The sequence is that of Hemoglobin subunit beta-Z (HBBZ) from Mesocricetus auratus (Golden hamster).